The following is a 119-amino-acid chain: Protein Wnt-4 (119 aa).

Serine 1 carries the O-palmitoleoyl serine; by PORCN lipid modification. 2 disulfides stabilise this stretch: cysteine 69–cysteine 100 and cysteine 85–cysteine 95. Residue asparagine 86 is glycosylated (N-linked (GlcNAc...) asparagine).

It belongs to the Wnt family. In terms of processing, palmitoleoylation is required for efficient binding to frizzled receptors. Depalmitoleoylation leads to Wnt signaling pathway inhibition.

The protein localises to the secreted. It localises to the extracellular space. It is found in the extracellular matrix. Its function is as follows. Ligand for members of the frizzled family of seven transmembrane receptors. Plays an important role in embryonic development. The sequence is that of Protein Wnt-4 (WNT-4) from Eptatretus stoutii (Pacific hagfish).